The sequence spans 380 residues: Deoxyguanosinetriphosphate triphosphohydrolase-like protein (380 aa).

A disordered region spans residues 1 to 28 (MYAPYATMPDRSRGRAVPEEESSFRSPF). One can recognise an HD domain in the interval 62–198 (RLTHSIEVGQ…AALADDIAYN (137 aa)).

The protein belongs to the dGTPase family. Type 2 subfamily.

The chain is Deoxyguanosinetriphosphate triphosphohydrolase-like protein from Ruegeria sp. (strain TM1040) (Silicibacter sp.).